Reading from the N-terminus, the 438-residue chain is V-type ATP synthase beta chain (438 aa).

The protein belongs to the ATPase alpha/beta chains family.

In terms of biological role, produces ATP from ADP in the presence of a proton gradient across the membrane. The V-type beta chain is a regulatory subunit. This is V-type ATP synthase beta chain from Chlamydia trachomatis serovar L2b (strain UCH-1/proctitis).